Consider the following 263-residue polypeptide: Chorismate mutase 2 (263 aa).

The Chorismate mutase domain maps to 3-256; sequence CGDYDDKLSL…QVEYLLRRLD (254 aa).

Homodimer. As to expression, expressed in root, stem, stigma, anther, leaf, petal tube, petal limb and sepal tissues with highest levels in petal tubes and stems.

Its subcellular location is the cytoplasm. It is found in the cytosol. It carries out the reaction chorismate = prephenate. It participates in metabolic intermediate biosynthesis; prephenate biosynthesis; prephenate from chorismate: step 1/1. With respect to regulation, no allosteric regulation. In terms of biological role, mediates the conversion of chorismate to prephenate. The chain is Chorismate mutase 2 from Petunia hybrida (Petunia).